The primary structure comprises 546 residues: Probable protein kinase UbiB (546 aa).

The 379-residue stretch at 124-502 (DFDIKPLASA…RVRQGQSRYL (379 aa)) folds into the Protein kinase domain. ATP-binding positions include 130-138 (LASASIAQV) and Lys153. Asp288 serves as the catalytic Proton acceptor. The next 2 helical transmembrane spans lie at 501–521 (YLFGIGATLLLSGTLLLINRP) and 522–542 (DWQMMPAWLMAGGLVVWLIGW).

Belongs to the ABC1 family. UbiB subfamily.

Its subcellular location is the cell inner membrane. Its pathway is cofactor biosynthesis; ubiquinone biosynthesis [regulation]. In terms of biological role, is probably a protein kinase regulator of UbiI activity which is involved in aerobic coenzyme Q (ubiquinone) biosynthesis. This is Probable protein kinase UbiB from Enterobacter sp. (strain 638).